The following is a 70-amino-acid chain: Small ribosomal subunit protein bS21 (70 aa).

It belongs to the bacterial ribosomal protein bS21 family.

The chain is Small ribosomal subunit protein bS21 from Paracidovorax citrulli (strain AAC00-1) (Acidovorax citrulli).